The chain runs to 2925 residues: Otogelin (2925 aa).

An N-terminal signal peptide occupies residues 1–25; that stretch reads MGVLASALCWLLCVWLPWGEQAAES. The tract at residues 39 to 69 is disordered; that stretch reads GRSGARGMRNVKGMRNGPAQTRVSSSSSHQE. Positions 56–69 are enriched in polar residues; sequence PAQTRVSSSSSHQE. The EGF-like domain maps to 102 to 139; it reads HRAKCAPSYLFSCFNGGECVHPAFCDCRRFNATGPRCQ. Cystine bridges form between cysteine 106/cysteine 120, cysteine 114/cysteine 126, cysteine 128/cysteine 138, cysteine 152/cysteine 285, and cysteine 199/cysteine 206. The VWFD 1 domain occupies 150 to 322; that stretch reads SICRAWGQHH…SWQEQAPNQP (173 aa). Residues 316 to 335 are disordered; that stretch reads EQAPNQPPGPTTSSLPRPPC. Positions 326–335 are enriched in polar residues; that stretch reads TTSSLPRPPC. The VWFD 2 domain maps to 512 to 688; it reads AECSVTGDIH…NSWKTLSACS (177 aa). 3 cysteine pairs are disulfide-bonded: cysteine 514–cysteine 652, cysteine 536–cysteine 687, and cysteine 558–cysteine 566. One can recognise a TIL domain in the interval 780–844; that stretch reads CEASKEYSPC…ADLCVPRNQC (65 aa). Asparagine 914 carries N-linked (GlcNAc...) asparagine glycosylation. The VWFD 3 domain maps to 984–1152; that stretch reads STCTAYGDRH…SWAAVECPDT (169 aa). 2 cysteine pairs are disulfide-bonded: cysteine 986-cysteine 1115 and cysteine 1030-cysteine 1037. The interval 1476–1540 is disordered; that stretch reads LGNETLPPSQ…PVVSPGPTQT (65 aa). Residue asparagine 1478 is glycosylated (N-linked (GlcNAc...) asparagine). Residues 1502–1528 are compositionally biased toward low complexity; the sequence is PRTPTHRPALTPAAPLTTALNPPVTAT. Asparagine 1612 carries an N-linked (GlcNAc...) asparagine glycan. 3 disordered regions span residues 1636 to 1679, 1693 to 1715, and 1737 to 1788; these read GHGS…HKAV, VPQPTQAQSASSPSTPLTVAGTA, and KGEA…ASLS. The segment covering 1650-1659 has biased composition (polar residues); it reads SLTASPSSRP. Residues 1694-1708 show a composition bias toward low complexity; sequence PQPTQAQSASSPSTP. Residues 1751-1764 are compositionally biased toward pro residues; that stretch reads SPQPHPLPSAPPRP. In terms of domain architecture, VWFD 4 spans 2110–2289; the sequence is CRCSIFPDLS…SWQVPSSLTS (180 aa). Disulfide bonds link cysteine 2112–cysteine 2249, cysteine 2840–cysteine 2889, cysteine 2854–cysteine 2903, cysteine 2865–cysteine 2920, and cysteine 2869–cysteine 2922. The CTCK domain occupies 2840 to 2925; it reads CKKVTIRMTI…EPTDCACQWS (86 aa).

This sequence belongs to the otogelin family. Post-translationally, N-glycosylated. Not O-glycosylated.

The protein localises to the apical cell membrane. Its subcellular location is the secreted. It is found in the extracellular space. Functionally, glycoprotein specific to acellular membranes of the inner ear. May be required for the anchoring of the otoconial membranes and cupulae to the underlying neuroepithelia in the vestibule. May be involved in the organization and/or stabilization of the fibrillar network that compose the tectorial membrane in the cochlea. May play a role in mechanotransduction processes. The sequence is that of Otogelin (OTOG) from Homo sapiens (Human).